Reading from the N-terminus, the 146-residue chain is Anti-sigma F factor (146 aa).

This sequence belongs to the anti-sigma-factor family.

The enzyme catalyses L-seryl-[protein] + ATP = O-phospho-L-seryl-[protein] + ADP + H(+). It catalyses the reaction L-threonyl-[protein] + ATP = O-phospho-L-threonyl-[protein] + ADP + H(+). Binds to sigma F and blocks its ability to form an RNA polymerase holoenzyme (E-sigma F). Phosphorylates SpoIIAA on a serine residue. This phosphorylation may enable SpoIIAA to act as an anti-anti-sigma factor that counteracts SpoIIAB and thus releases sigma F from inhibition. In Geobacillus sp. (strain WCH70), this protein is Anti-sigma F factor.